A 400-amino-acid chain; its full sequence is MLNSLELEGRPQDTRVVVAMSGGVDSSVTAALLKSEGYDVVGITLQLYDHGAATHRKGACCAGQDIHDARNVAERLGIPHYVLDYENRFRETVIENFADSYASGETPVPCIECNRLVKFRDLLATARELGAAALATGHYVASHRMAGGSRALLCAADADRDQSYFLFATTREQLDFLRFPLGDMTKPQTRELARSFGLSVADKHDSQDICFVPTGRYTDIISQLKPNAMVSGDIVDLDGHVIGHHDGIVHFTVGQRRGLGIASGAPLYVLSLDAANRRVVVGPREALKMHRIILRDVNWIGDGALDRAVGAGLELFVRVRSTRKPQPAWLRAIDGRYEIELVAGEEGVSPGQACVFYDGLEGQARVLGGGFIARAMARRANEIAAQNGTPAQPLAAELRG.

ATP is bound by residues 19–26 (AMSGGVDS) and Leu45. Catalysis depends on Cys113, which acts as the Nucleophile. An intrachain disulfide couples Cys113 to Cys210. Gly137 is an ATP binding site. The tract at residues 160–162 (RDQ) is interaction with tRNA. Catalysis depends on Cys210, which acts as the Cysteine persulfide intermediate.

It belongs to the MnmA/TRMU family.

The protein localises to the cytoplasm. It catalyses the reaction S-sulfanyl-L-cysteinyl-[protein] + uridine(34) in tRNA + AH2 + ATP = 2-thiouridine(34) in tRNA + L-cysteinyl-[protein] + A + AMP + diphosphate + H(+). Its function is as follows. Catalyzes the 2-thiolation of uridine at the wobble position (U34) of tRNA, leading to the formation of s(2)U34. This is tRNA-specific 2-thiouridylase MnmA from Nitrobacter hamburgensis (strain DSM 10229 / NCIMB 13809 / X14).